Consider the following 231-residue polypeptide: 5'-methylthioadenosine/S-adenosylhomocysteine nucleosidase (231 aa).

E12 functions as the Proton acceptor in the catalytic mechanism. Substrate contacts are provided by residues G78, V153, and 174-175 (ME). Residue D198 is the Proton donor of the active site.

Belongs to the PNP/UDP phosphorylase family. MtnN subfamily.

It carries out the reaction S-adenosyl-L-homocysteine + H2O = S-(5-deoxy-D-ribos-5-yl)-L-homocysteine + adenine. It catalyses the reaction S-methyl-5'-thioadenosine + H2O = 5-(methylsulfanyl)-D-ribose + adenine. The catalysed reaction is 5'-deoxyadenosine + H2O = 5-deoxy-D-ribose + adenine. The protein operates within amino-acid biosynthesis; L-methionine biosynthesis via salvage pathway; S-methyl-5-thio-alpha-D-ribose 1-phosphate from S-methyl-5'-thioadenosine (hydrolase route): step 1/2. Functionally, catalyzes the irreversible cleavage of the glycosidic bond in both 5'-methylthioadenosine (MTA) and S-adenosylhomocysteine (SAH/AdoHcy) to adenine and the corresponding thioribose, 5'-methylthioribose and S-ribosylhomocysteine, respectively. Also cleaves 5'-deoxyadenosine, a toxic by-product of radical S-adenosylmethionine (SAM) enzymes, into 5-deoxyribose and adenine. This Vibrio vulnificus (strain CMCP6) protein is 5'-methylthioadenosine/S-adenosylhomocysteine nucleosidase.